The primary structure comprises 353 residues: Photosystem II protein D1 (353 aa).

An N-acetylthreonine modification is found at Thr2. Thr2 is modified (phosphothreonine). 3 consecutive transmembrane segments (helical) span residues Tyr29–Ser46, His118–Leu133, and Trp142–Ala156. Residue His118 coordinates chlorophyll a. Residue Tyr126 participates in pheophytin a binding. [CaMn4O5] cluster contacts are provided by Asp170 and Glu189. A helical transmembrane segment spans residues Phe197–Leu218. Residue His198 coordinates chlorophyll a. Residues His215 and Ser264–Phe265 contribute to the a quinone site. Residue His215 coordinates Fe cation. A Fe cation-binding site is contributed by His272. A helical transmembrane segment spans residues Phe274–Leu288. Residues His332, Glu333, Asp342, and Ala344 each contribute to the [CaMn4O5] cluster site. A propeptide spanning residues Ser345–Gly353 is cleaved from the precursor.

The protein belongs to the reaction center PufL/M/PsbA/D family. In terms of assembly, PSII is composed of 1 copy each of membrane proteins PsbA, PsbB, PsbC, PsbD, PsbE, PsbF, PsbH, PsbI, PsbJ, PsbK, PsbL, PsbM, PsbT, PsbX, PsbY, PsbZ, Psb30/Ycf12, at least 3 peripheral proteins of the oxygen-evolving complex and a large number of cofactors. It forms dimeric complexes. The D1/D2 heterodimer binds P680, chlorophylls that are the primary electron donor of PSII, and subsequent electron acceptors. It shares a non-heme iron and each subunit binds pheophytin, quinone, additional chlorophylls, carotenoids and lipids. D1 provides most of the ligands for the Mn4-Ca-O5 cluster of the oxygen-evolving complex (OEC). There is also a Cl(-1) ion associated with D1 and D2, which is required for oxygen evolution. The PSII complex binds additional chlorophylls, carotenoids and specific lipids. serves as cofactor. Post-translationally, tyr-161 forms a radical intermediate that is referred to as redox-active TyrZ, YZ or Y-Z. C-terminally processed by CTPA; processing is essential to allow assembly of the oxygen-evolving complex and thus photosynthetic growth.

The protein resides in the plastid. Its subcellular location is the chloroplast thylakoid membrane. The catalysed reaction is 2 a plastoquinone + 4 hnu + 2 H2O = 2 a plastoquinol + O2. Its function is as follows. Photosystem II (PSII) is a light-driven water:plastoquinone oxidoreductase that uses light energy to abstract electrons from H(2)O, generating O(2) and a proton gradient subsequently used for ATP formation. It consists of a core antenna complex that captures photons, and an electron transfer chain that converts photonic excitation into a charge separation. The D1/D2 (PsbA/PsbD) reaction center heterodimer binds P680, the primary electron donor of PSII as well as several subsequent electron acceptors. The polypeptide is Photosystem II protein D1 (Nephroselmis olivacea (Green alga)).